Reading from the N-terminus, the 315-residue chain is Olfactory receptor 10H5 (315 aa).

Residues 1–25 (MQGLNHTSVSEFILVGFSAFPHLQL) lie on the Extracellular side of the membrane. An N-linked (GlcNAc...) asparagine glycan is attached at Asn-5. Residues 26 to 46 (MLFLLFLLMYLFTLLGNLLIM) traverse the membrane as a helical segment. Topologically, residues 47–54 (ATVWSERS) are cytoplasmic. A helical transmembrane segment spans residues 55 to 75 (LHMPMYLFLCALSITEILYTV). At 76 to 99 (AIIPRMLADLLSTQRSIAFLACAS) the chain is on the extracellular side. Cys-97 and Cys-189 are joined by a disulfide. Residues 100–120 (QMFFSFSFGFTHSFLLTVMGY) form a helical membrane-spanning segment. The Cytoplasmic segment spans residues 121–139 (DRYVAICHPLRYNVLMSLR). A helical transmembrane segment spans residues 140-160 (GCTCRVGCSWAGGLVMGMVVT). Over 161–197 (SAIFHLAFCGHKEIHHFFCHVPPLLKLACGDDVLVVA) the chain is Extracellular. The helical transmembrane segment at 198 to 218 (KGVGLVCITALLGCFLLILLS) threads the bilayer. Over 219–238 (YAFIVAAILKIPSAEGRNKA) the chain is Cytoplasmic. A helical membrane pass occupies residues 239–259 (FSTCASHLTVVVVHYGFASVI). Residues 260 to 272 (YLKPKGPQSPEGD) lie on the Extracellular side of the membrane. A helical membrane pass occupies residues 273–293 (TLMGITYTVLTPFLSPIIFSL). The Cytoplasmic portion of the chain corresponds to 294-315 (RNKELKVAMKKTCFTKLFPQNC).

This sequence belongs to the G-protein coupled receptor 1 family.

It localises to the cell membrane. Functionally, odorant receptor. The polypeptide is Olfactory receptor 10H5 (OR10H5) (Homo sapiens (Human)).